Consider the following 822-residue polypeptide: Serine/threonine-protein kinase kin-29 (822 aa).

A Protein kinase domain is found at 16–267 (YDVGRAIGKG…IQNVLQHRWM (252 aa)). ATP is bound by residues 22–30 (IGKGNFATV) and K45. The active-site Proton acceptor is D138. Disordered stretches follow at residues 348–367 (EGTGEEFPRRGSRGSILSGK), 389–423 (LSSPDCDSDDSSNSDLCDDSPMSSMGPMNHERQFG), and 577–602 (NPIPRYQRTPYTKAPPAERRSSWASP). Acidic residues predominate over residues 394–406 (CDSDDSSNSDLCD).

The protein belongs to the protein kinase superfamily. CAMK Ser/Thr protein kinase family. SNF1 subfamily. As to quaternary structure, interacts with tax-6. Mg(2+) is required as a cofactor. Autophosphorylated. Elevated cAMP levels appears to act via PKA to directly or indirectly phosphorylate multiple sites on kin-29 and inhibit function. As to expression, primarily neuronal, with additional expression in body wall muscle and hypodermal cells. Among neuronal cells, expressed in multiple sensory neurons and interneurons in the lateral, anterior, and lumbar ganglia, as well as in motor neurons in the ventral motor cord. Present in the AWB and AWC olfactory neurons.

The protein resides in the cytoplasm. It localises to the nucleus. It carries out the reaction L-seryl-[protein] + ATP = O-phospho-L-seryl-[protein] + ADP + H(+). The enzyme catalyses L-threonyl-[protein] + ATP = O-phospho-L-threonyl-[protein] + ADP + H(+). Its function is as follows. Regulates chemoreceptor expression by phosphorylating the hda-4 class II histone deacetylase (HDAC) and inhibiting the gene repression functions of hda-4 and the mef-2 transcription factor, enabling the correct sensing and transduction of food signals. Role in determining body size, the dauer decision and serotonin-mediated egg laying. May modulate the Sma/Mab pathway and regulates development in the later larval stages. The protein is Serine/threonine-protein kinase kin-29 of Caenorhabditis elegans.